Consider the following 148-residue polypeptide: Lysozyme-like protein 6 (148 aa).

The N-terminal stretch at Met1–Ala19 is a signal peptide. One can recognise a C-type lysozyme domain in the interval Ser20–Arg148. Cystine bridges form between Cys25–Cys145, Cys49–Cys133, Cys83–Cys98, and Cys94–Cys112. Active-site residues include Glu54 and Asp71.

The protein belongs to the glycosyl hydrolase 22 family. In terms of assembly, monomer. Expressed in testis, epididymis and spermatozoa (at protein level). Expressed in late-stage spermatocytes and round spermatids.

It is found in the secreted. Its subcellular location is the cell surface. It localises to the cell projection. The protein localises to the cilium. The protein resides in the flagellum. The enzyme catalyses Hydrolysis of (1-&gt;4)-beta-linkages between N-acetylmuramic acid and N-acetyl-D-glucosamine residues in a peptidoglycan and between N-acetyl-D-glucosamine residues in chitodextrins.. Functionally, may be involved sperm-egg plasma membrane adhesion and fusion during fertilization. Exhibits bacteriolytic activity in vitro against Micrococcus luteus and Staphylococcus aureus. Shows weak bacteriolytic activity against Gram-positive bacteria at physiological pH. Bacteriolytic activity is pH-dependent, with a maximum at around pH 5.6. This chain is Lysozyme-like protein 6 (LYZL6), found in Homo sapiens (Human).